Here is a 383-residue protein sequence, read N- to C-terminus: MKKFMNFFSSNEFLKMIMSTIYLPTPVNINYMWNFGSILGIFLMIQIISGFILSMHYCPNIDIAFWSITNIMKDMNSGWLFRLIHMNGASFYFLMMYIHISRNLFYCSYKLNNVWGIGIMILLMSMAAAFMGYVLPWGQMSYWGATVITNLLSAIPYIGDTIVLWIWGGFSINNATLNRFFSLHFILPLLILFMVILHLFALHLTGSSNPLGSNFNNYKISFHPYFSIKDLLGFYIILFIFMFINFQFPYHLGDPDNFKIANPMNTPTHIKPEWYFLFAYSILRAIPNKLGGVIGLVMSILILYIMIFYNNKMMNNKFNMLNKIYYWMFINNFILLTWLGKQLIEYPFTNINMLFTTTYFLYFFLNFYLSKLWDNLIWNSPLN.

The next 4 membrane-spanning stretches (helical) occupy residues Phe35–Met55, Trp79–Ile100, Trp115–Leu135, and Phe180–Phe200. Heme b-binding residues include His85 and His99. Positions 184 and 198 each coordinate heme b. His203 is a binding site for a ubiquinone. Helical transmembrane passes span Ile228 to Phe248, Leu290 to Asn310, Leu321 to Lys341, and Phe348 to Tyr368.

The protein belongs to the cytochrome b family. As to quaternary structure, the main subunits of complex b-c1 are: cytochrome b, cytochrome c1 and the Rieske protein. Heme b serves as cofactor.

It is found in the mitochondrion inner membrane. Its function is as follows. Component of the ubiquinol-cytochrome c reductase complex (complex III or cytochrome b-c1 complex) that is part of the mitochondrial respiratory chain. The b-c1 complex mediates electron transfer from ubiquinol to cytochrome c. Contributes to the generation of a proton gradient across the mitochondrial membrane that is then used for ATP synthesis. The chain is Cytochrome b (MT-CYB) from Apis mellifera ligustica (Common honeybee).